A 192-amino-acid chain; its full sequence is MNTQDVIDIFKQADAILEGHFILTSGRHSAIYMQKAQVFMHADLTEKLCRGLAEKIKRSIKEKIDYVVGPAIGGLIPSYETSRHLGIPSLWVERVNGIFELRRFKIKNGARVVIVEDIVTTGLSIRETVEALVAAGADVVASACILDRSGGKVDVGVPLIALAEYEIVSYASDALPTELALLPAVKPGSRNI.

Residue 116-124 (EDIVTTGLS) coordinates 5-phospho-alpha-D-ribose 1-diphosphate. Orotate is bound by residues T120 and R148.

Belongs to the purine/pyrimidine phosphoribosyltransferase family. PyrE subfamily. In terms of assembly, homodimer. The cofactor is Mg(2+).

It carries out the reaction orotidine 5'-phosphate + diphosphate = orotate + 5-phospho-alpha-D-ribose 1-diphosphate. The protein operates within pyrimidine metabolism; UMP biosynthesis via de novo pathway; UMP from orotate: step 1/2. Its function is as follows. Catalyzes the transfer of a ribosyl phosphate group from 5-phosphoribose 1-diphosphate to orotate, leading to the formation of orotidine monophosphate (OMP). The chain is Orotate phosphoribosyltransferase from Bartonella quintana (strain Toulouse) (Rochalimaea quintana).